Consider the following 94-residue polypeptide: Aspartyl/glutamyl-tRNA(Asn/Gln) amidotransferase subunit C (94 aa).

The protein belongs to the GatC family. As to quaternary structure, heterotrimer of A, B and C subunits.

The enzyme catalyses L-glutamyl-tRNA(Gln) + L-glutamine + ATP + H2O = L-glutaminyl-tRNA(Gln) + L-glutamate + ADP + phosphate + H(+). It carries out the reaction L-aspartyl-tRNA(Asn) + L-glutamine + ATP + H2O = L-asparaginyl-tRNA(Asn) + L-glutamate + ADP + phosphate + 2 H(+). Functionally, allows the formation of correctly charged Asn-tRNA(Asn) or Gln-tRNA(Gln) through the transamidation of misacylated Asp-tRNA(Asn) or Glu-tRNA(Gln) in organisms which lack either or both of asparaginyl-tRNA or glutaminyl-tRNA synthetases. The reaction takes place in the presence of glutamine and ATP through an activated phospho-Asp-tRNA(Asn) or phospho-Glu-tRNA(Gln). The protein is Aspartyl/glutamyl-tRNA(Asn/Gln) amidotransferase subunit C of Heliobacterium modesticaldum (strain ATCC 51547 / Ice1).